Consider the following 625-residue polypeptide: tRNA uridine 5-carboxymethylaminomethyl modification enzyme MnmG (625 aa).

Residues 13–18 (GGGHAG), Val125, and Ser182 each bind FAD. NAD(+) is bound at residue 276 to 290 (GPRYCPSIEDKITRF). Gln373 provides a ligand contact to FAD.

It belongs to the MnmG family. Homodimer. Heterotetramer of two MnmE and two MnmG subunits. FAD serves as cofactor.

The protein localises to the cytoplasm. Functionally, NAD-binding protein involved in the addition of a carboxymethylaminomethyl (cmnm) group at the wobble position (U34) of certain tRNAs, forming tRNA-cmnm(5)s(2)U34. The polypeptide is tRNA uridine 5-carboxymethylaminomethyl modification enzyme MnmG (Lactococcus lactis subsp. lactis (strain IL1403) (Streptococcus lactis)).